A 325-amino-acid chain; its full sequence is Elongation factor P--(R)-beta-lysine ligase (325 aa).

A substrate-binding site is contributed by 76 to 78; sequence SPE. Residues 100-102 and Asn-109 contribute to the ATP site; that span reads RNE. Residue Tyr-118 coordinates substrate. Position 244–245 (244–245) interacts with ATP; it reads EL. Glu-251 is a substrate binding site. Gly-300 contributes to the ATP binding site.

Belongs to the class-II aminoacyl-tRNA synthetase family. EpmA subfamily. As to quaternary structure, homodimer.

It catalyses the reaction D-beta-lysine + L-lysyl-[protein] + ATP = N(6)-((3R)-3,6-diaminohexanoyl)-L-lysyl-[protein] + AMP + diphosphate + H(+). Its function is as follows. With EpmB is involved in the beta-lysylation step of the post-translational modification of translation elongation factor P (EF-P). Catalyzes the ATP-dependent activation of (R)-beta-lysine produced by EpmB, forming a lysyl-adenylate, from which the beta-lysyl moiety is then transferred to the epsilon-amino group of a conserved specific lysine residue in EF-P. The sequence is that of Elongation factor P--(R)-beta-lysine ligase from Pectobacterium atrosepticum (strain SCRI 1043 / ATCC BAA-672) (Erwinia carotovora subsp. atroseptica).